The primary structure comprises 740 residues: MERTYQYAWIIPFVPLLVTMLIGLGLLLIPTATKNIRRIWAFPAVLLLSIVMVFSTKLAIQQINGSSIYEYLWSWSITSDFSLEFGYLIDPLTSIMSILITTVGIMVLIYSDNYMSHDQGYLRFFAYMSFFNTSMLGLVTSPNLIQIHIFWELVGMCSYLLIGFWFTRPIAANACQKAFVTNRVGDFGLLLGILGFYLITGSFEFQDLFEIFNDSIINNNEINSSFATLCAFLLFLGAVAKSAQFPLHVWLPDAMEGPTPISALIHAATMVAAGIFLVARLLPLFIGIPYIMNIISLIGLITVLLGATLALAQRDIKRSLAYSTMSQLGYIMLALGIGSYRAALFHLITHAYSKALLFLGSGSIIHSMEPIVGYSPAKSQNMVLMGGLTKYMPITKTTFFLGTLSLCGIPPLACFWSKDEIINDSWLYSPIFATIACYTAGLTAFYMFRMYLLTFEGHLRSNFKNYSGHTNSSFYSISIWGQEGSKPVSSNLLLATRNNNDKSSFSSCPFSNTYKIAGYVRNMRSSFSTHFLNKDPYTLLYPHESDNTMLFPLLILAIFTLFVGCIGIRFGQEVMEVDILSKWLTPSMKLLHQNSTEDWYKFVTNAFYSVSIAYFGIFIASVLYGSVYSDRQNLYLINSFAKMGPKMRIRLEQIINVIYNWSYNRGYIDVYYEKVFIRGIRGLAQLAHSFDRRVIDGVTNGVGVASFFLGEGIKYIGGGRISSYLFLYLACVSIVLLLVK.

A run of 16 helical transmembrane segments spans residues 9 to 29 (WIIPFVPLLVTMLIGLGLLLI), 39 to 59 (IWAFPAVLLLSIVMVFSTKLA), 89 to 109 (IDPLTSIMSILITTVGIMVLI), 125 to 145 (FAYMSFFNTSMLGLVTSPNLI), 147 to 167 (IHIFWELVGMCSYLLIGFWFT), 185 to 205 (GDFGLLLGILGFYLITGSFEF), 231 to 251 (AFLLFLGAVAKSAQFPLHVWL), 259 to 279 (TPISALIHAATMVAAGIFLVA), 281 to 301 (LLPLFIGIPYIMNIISLIGLI), 328 to 348 (LGYIMLALGIGSYRAALFHLI), 355 to 375 (ALLFLGSGSIIHSMEPIVGYS), 397 to 417 (TTFFLGTLSLCGIPPLACFWS), 426 to 446 (WLYSPIFATIACYTAGLTAFY), 548 to 568 (TMLFPLLILAIFTLFVGCIGI), 607 to 627 (FYSVSIAYFGIFIASVLYGSV), and 719 to 739 (GRISSYLFLYLACVSIVLLLV).

The protein belongs to the complex I subunit 5 family. As to quaternary structure, NDH is composed of at least 16 different subunits, 5 of which are encoded in the nucleus.

The protein localises to the plastid. The protein resides in the chloroplast thylakoid membrane. It catalyses the reaction a plastoquinone + NADH + (n+1) H(+)(in) = a plastoquinol + NAD(+) + n H(+)(out). It carries out the reaction a plastoquinone + NADPH + (n+1) H(+)(in) = a plastoquinol + NADP(+) + n H(+)(out). NDH shuttles electrons from NAD(P)H:plastoquinone, via FMN and iron-sulfur (Fe-S) centers, to quinones in the photosynthetic chain and possibly in a chloroplast respiratory chain. The immediate electron acceptor for the enzyme in this species is believed to be plastoquinone. Couples the redox reaction to proton translocation, and thus conserves the redox energy in a proton gradient. The sequence is that of NAD(P)H-quinone oxidoreductase subunit 5, chloroplastic (ndhF) from Nuphar advena (Common spatterdock).